Here is a 607-residue protein sequence, read N- to C-terminus: Vacuolar fusion protein MON1 homolog (607 aa).

Over residues 1 to 14 (MATSDSRSSPSSSD) the composition is skewed to low complexity. Disordered regions lie at residues 1–173 (MATS…DDAS) and 463–486 (PIDR…DISV). Positions 21–55 (NPSSDPETNSERVQSQLESMNLSQPSEVSDGSHTE) are enriched in polar residues.

The protein belongs to the MON1/SAND family. Interacts with CCZ1A, CCZ1B and RABF2B. Widely expressed at stable levels.

The protein resides in the endosome. It localises to the prevacuolar compartment. In terms of biological role, plays an important role in membrane trafficking through the secretory apparatus. In complex with CCZ1, acts as a guanine exchange factor (GEF) for RABG3F of the Rab7 protein family. Promotes the exchange of GDP to GTP, converting RABG3F from an inactive GDP-bound form into an active GTP-bound form. The RABG3F active form is involved in protein trafficking from prevacuolar compartments (PVCs) to vacuoles. May serve as a linker between Rab5 and Rab7 protein families in PVCs and mediate PVC maturation. This Arabidopsis thaliana (Mouse-ear cress) protein is Vacuolar fusion protein MON1 homolog.